A 200-amino-acid polypeptide reads, in one-letter code: Rho GDP-dissociation inhibitor 2 (200 aa).

The interval 1 to 40 (MTEKAPEPHVEEDDDELDGKLNYKPPPQKSLKELQEMDKD) is disordered. The residue at position 2 (threonine 2) is an N-acetylthreonine. Lysine 20 is subject to N6-acetyllysine. At tyrosine 23 the chain carries Phosphotyrosine. N6-acetyllysine is present on residues lysine 24, lysine 39, lysine 46, lysine 101, and lysine 123. Over residues 30 to 40 (SLKELQEMDKD) the composition is skewed to basic and acidic residues. Serine 144 carries the post-translational modification Phosphoserine. At lysine 174 the chain carries N6-acetyllysine.

It belongs to the Rho GDI family. Interacts with RHOA. Interacts with RAC1. Interacts with RAC2. Interacts with CDC42.

It is found in the cytoplasm. The protein resides in the cytosol. In terms of biological role, regulates the GDP/GTP exchange reaction of the Rho proteins by inhibiting the dissociation of GDP from them, and the subsequent binding of GTP to them. Regulates reorganization of the actin cytoskeleton mediated by Rho family members. The chain is Rho GDP-dissociation inhibitor 2 (ARHGDIB) from Bos taurus (Bovine).